The following is a 241-amino-acid chain: Prolactin-8A8 (241 aa).

Positions 1–30 (MELQFRQPHFSDALLLLLLSNLLLWEKASS) are cleaved as a signal peptide. 3 disulfides stabilise this stretch: Cys-34–Cys-41, Cys-101–Cys-217, and Cys-234–Cys-241. N-linked (GlcNAc...) asparagine glycosylation occurs at Asn-213.

It belongs to the somatotropin/prolactin family. As to expression, expressed specifically in the placenta. Predominantly expressed in spongiotrophoblast cells.

Its subcellular location is the secreted. This chain is Prolactin-8A8 (Prl8a8), found in Mus musculus (Mouse).